The chain runs to 226 residues: Enolase-phosphatase E1 (226 aa).

Asp-9 and Glu-11 together coordinate Mg(2+). Residues 115 to 116 (SS) and Lys-160 each bind substrate. Asp-185 is a Mg(2+) binding site.

This sequence belongs to the HAD-like hydrolase superfamily. MasA/MtnC family. Monomer. Mg(2+) is required as a cofactor.

The protein localises to the cytoplasm. It localises to the nucleus. It carries out the reaction 5-methylsulfanyl-2,3-dioxopentyl phosphate + H2O = 1,2-dihydroxy-5-(methylsulfanyl)pent-1-en-3-one + phosphate. Its pathway is amino-acid biosynthesis; L-methionine biosynthesis via salvage pathway; L-methionine from S-methyl-5-thio-alpha-D-ribose 1-phosphate: step 3/6. It functions in the pathway amino-acid biosynthesis; L-methionine biosynthesis via salvage pathway; L-methionine from S-methyl-5-thio-alpha-D-ribose 1-phosphate: step 4/6. Functionally, bifunctional enzyme that catalyzes the enolization of 2,3-diketo-5-methylthiopentyl-1-phosphate (DK-MTP-1-P) into the intermediate 2-hydroxy-3-keto-5-methylthiopentenyl-1-phosphate (HK-MTPenyl-1-P), which is then dephosphorylated to form the acireductone 1,2-dihydroxy-3-keto-5-methylthiopentene (DHK-MTPene). This chain is Enolase-phosphatase E1, found in Zygosaccharomyces rouxii (strain ATCC 2623 / CBS 732 / NBRC 1130 / NCYC 568 / NRRL Y-229).